Here is an 81-residue protein sequence, read N- to C-terminus: Photosystem I iron-sulfur center (81 aa).

4Fe-4S ferredoxin-type domains lie at 2–31 (SHSV…MVPW) and 37–68 (GQIA…VRVY). Residues Cys11, Cys14, Cys17, Cys21, Cys48, Cys51, Cys54, and Cys58 each contribute to the [4Fe-4S] cluster site.

In terms of assembly, the cyanobacterial PSI reaction center is composed of one copy each of PsaA,B,C,D,E,F,I,J,K,L,M and X, and forms trimeric complexes. [4Fe-4S] cluster serves as cofactor.

The protein localises to the cellular thylakoid membrane. It carries out the reaction reduced [plastocyanin] + hnu + oxidized [2Fe-2S]-[ferredoxin] = oxidized [plastocyanin] + reduced [2Fe-2S]-[ferredoxin]. In terms of biological role, apoprotein for the two 4Fe-4S centers FA and FB of photosystem I (PSI); essential for photochemical activity. FB is the terminal electron acceptor of PSI, donating electrons to ferredoxin. The C-terminus interacts with PsaA/B/D and helps assemble the protein into the PSI complex. Required for binding of PsaD and PsaE to PSI. PSI is a plastocyanin/cytochrome c6-ferredoxin oxidoreductase, converting photonic excitation into a charge separation, which transfers an electron from the donor P700 chlorophyll pair to the spectroscopically characterized acceptors A0, A1, FX, FA and FB in turn. In Trichodesmium erythraeum (strain IMS101), this protein is Photosystem I iron-sulfur center.